A 191-amino-acid chain; its full sequence is Akirin-1 (191 aa).

The segment at 17–70 (LLSPGSPKRRRCAPLPGPTPGLRPPDAEPPPLQMQTPPASLQQPAPPGSERRLP) is disordered. S22 is subject to Phosphoserine. The Nuclear localization signal signature appears at 23–28 (PKRRRC). Pro residues predominate over residues 31–48 (LPGPTPGLRPPDAEPPPL). The span at 49-59 (QMQTPPASLQQ) shows a compositional bias: polar residues. The residue at position 71 (T71) is a Phosphothreonine. Positions 188-191 (SYVS) match the SYVS motif motif.

The protein belongs to the akirin family. As to expression, expressed in macrophages and satellite cells.

Its subcellular location is the nucleus. Its function is as follows. Molecular adapter that acts as a bridge between proteins, and which is involved skeletal muscle development. Functions as a signal transducer for MSTN during skeletal muscle regeneration and myogenesis. May regulate chemotaxis of both macrophages and myoblasts by reorganising actin cytoskeleton, leading to more efficient lamellipodia formation via a PI3 kinase dependent pathway. In contrast to AKIRIN2, not involved in nuclear import of proteasomes. The protein is Akirin-1 of Mus musculus (Mouse).